The sequence spans 237 residues: Pyridoxine 5'-phosphate synthase (237 aa).

Residues Asn-7 and Arg-18 each coordinate 3-amino-2-oxopropyl phosphate. The active-site Proton acceptor is His-43. Residues Arg-45 and His-50 each contribute to the 1-deoxy-D-xylulose 5-phosphate site. Residue Glu-70 is the Proton acceptor of the active site. Thr-100 provides a ligand contact to 1-deoxy-D-xylulose 5-phosphate. His-190 serves as the catalytic Proton donor. Residues Asp-191 and 213 to 214 (GH) contribute to the 3-amino-2-oxopropyl phosphate site.

This sequence belongs to the PNP synthase family. As to quaternary structure, homooctamer; tetramer of dimers.

It localises to the cytoplasm. The enzyme catalyses 3-amino-2-oxopropyl phosphate + 1-deoxy-D-xylulose 5-phosphate = pyridoxine 5'-phosphate + phosphate + 2 H2O + H(+). Its pathway is cofactor biosynthesis; pyridoxine 5'-phosphate biosynthesis; pyridoxine 5'-phosphate from D-erythrose 4-phosphate: step 5/5. Its function is as follows. Catalyzes the complicated ring closure reaction between the two acyclic compounds 1-deoxy-D-xylulose-5-phosphate (DXP) and 3-amino-2-oxopropyl phosphate (1-amino-acetone-3-phosphate or AAP) to form pyridoxine 5'-phosphate (PNP) and inorganic phosphate. This chain is Pyridoxine 5'-phosphate synthase, found in Bacteroides fragilis (strain ATCC 25285 / DSM 2151 / CCUG 4856 / JCM 11019 / LMG 10263 / NCTC 9343 / Onslow / VPI 2553 / EN-2).